The following is a 394-amino-acid chain: Flap endonuclease 1 (394 aa).

An N-domain region spans residues methionine 1–lysine 103. Aspartate 34 contacts Mg(2+). A DNA-binding site is contributed by arginine 69. Aspartate 85 provides a ligand contact to Mg(2+). Positions arginine 102–glutamate 123 are disordered. Residues aspartate 121–histidine 252 form an I-domain region. The Mg(2+) site is built by glutamate 157, glutamate 159, aspartate 178, and aspartate 180. A DNA-binding site is contributed by glutamate 157. 2 residues coordinate DNA: glycine 230 and aspartate 232. Residue aspartate 232 participates in Mg(2+) binding. The tract at residues glutamine 340 to phenylalanine 348 is interaction with PCNA. Residues lysine 349–arginine 394 are disordered. Residues arginine 363–alanine 382 are compositionally biased toward basic and acidic residues. Basic residues predominate over residues lysine 383–arginine 394.

This sequence belongs to the XPG/RAD2 endonuclease family. FEN1 subfamily. As to quaternary structure, interacts with PCNA. Three molecules of FEN1 bind to one PCNA trimer with each molecule binding to one PCNA monomer. PCNA stimulates the nuclease activity without altering cleavage specificity. Mg(2+) is required as a cofactor. Post-translationally, phosphorylated. Phosphorylation upon DNA damage induces relocalization to the nuclear plasma.

It localises to the nucleus. Its subcellular location is the nucleolus. It is found in the nucleoplasm. The protein resides in the mitochondrion. Structure-specific nuclease with 5'-flap endonuclease and 5'-3' exonuclease activities involved in DNA replication and repair. During DNA replication, cleaves the 5'-overhanging flap structure that is generated by displacement synthesis when DNA polymerase encounters the 5'-end of a downstream Okazaki fragment. It enters the flap from the 5'-end and then tracks to cleave the flap base, leaving a nick for ligation. Also involved in the long patch base excision repair (LP-BER) pathway, by cleaving within the apurinic/apyrimidinic (AP) site-terminated flap. Acts as a genome stabilization factor that prevents flaps from equilibrating into structures that lead to duplications and deletions. Also possesses 5'-3' exonuclease activity on nicked or gapped double-stranded DNA, and exhibits RNase H activity. Also involved in replication and repair of rDNA and in repairing mitochondrial DNA. The polypeptide is Flap endonuclease 1 (Arthroderma otae (strain ATCC MYA-4605 / CBS 113480) (Microsporum canis)).